A 354-amino-acid polypeptide reads, in one-letter code: UDP-galactose transporter homolog 1 (354 aa).

A run of 5 helical transmembrane segments spans residues 6 to 26, 54 to 74, 95 to 112, 123 to 143, and 148 to 168; these read GGSI…FLTW, LVIN…YSVV, FFKS…SSPL, LAYL…HFVL, and FPLY…IFTL. N-linked (GlcNAc...) asparagine glycosylation occurs at Asn202. The next 4 membrane-spanning stretches (helical) occupy residues 227-247, 268-288, 295-317, and 321-340; these read YLMC…ALIF, MNIL…FIIL, ILIT…LFGH, and GLQW…EALV.

The protein belongs to the nucleotide-sugar transporter family. SLC35B subfamily.

The protein resides in the endoplasmic reticulum membrane. Its function is as follows. May be involved in specific transport of UDP-Gal from the cytosol to the Golgi lumen. Involved in the maintenance of optimal conditions for the folding of secretory pathway proteins in the endoplasmic reticulum. This chain is UDP-galactose transporter homolog 1 (HUT1), found in Debaryomyces hansenii (strain ATCC 36239 / CBS 767 / BCRC 21394 / JCM 1990 / NBRC 0083 / IGC 2968) (Yeast).